Reading from the N-terminus, the 449-residue chain is Probable cysteine proteinase 224L (449 aa).

Residues Cys99, His292, and Asn322 contribute to the active site. Residues Asp429–Leu449 traverse the membrane as a helical segment.

Belongs to the peptidase C1 family.

Its subcellular location is the membrane. Probable cysteine protease. This chain is Probable cysteine proteinase 224L, found in Acheta domesticus (House cricket).